Reading from the N-terminus, the 1030-residue chain is MELWLGRLWLYVMLLLLLLQLCQDQELLGPSLQTPSEEDQVPEGLWGPWGRWASCSQPCGVGVQRRSRTCELHPALSLPPRPPRHPEAPQPRGQGSRPQTPRDPQSLYRPQPRGRGGPLRGPASQVGREETQEPRGAQRFRVRDPIKPGMFGYGRVPFALPLHRSRRLAHKPGQPKDSSTAEETLPSQPPSTEPASEKHSPHMQPPELRAQSRSPSAETPRSGTAQTEVPSRTSSAPSDMGIPAPTSSFRDSRSFQGSPEPRMPTSQGAERQPHPFSPVTRSQLSRRHWRPPGSPHRSPDGWLPLTRDSSPHWSLFAPSSPTPECSGESEQMRACSQEPCPPEQPDPRALQCAAFDSQEFMGQLYQWEPFTEVQGSQRCELNCRPRGFRFYVRHTEKVQDGTLCQPGSLDICVAGHCLSPGCDGILGSGRRPDGCGVCGGDGSTCRLVSGNLTDRGGPLGYQKILWIPAGASHLRISQFRPSSNYLALRGPGGRSIINGNWAVDPPGSYAAVGTVFQYNRPPREEGKGETLSAEGPTTQPVDVYMIFQEDNPGVFYQYVTSAAPESPSTMPPALQLQPEMLRGEPLLPSAPRPVRAPGTLQRQARIPQVPPPTHVRTAMGSSAGYWKQVGHSECSASCGKGVWRPIFLCVSRESGEELDEQSCAVGARPPASPESCHRPPCPPYWEAGEWTSCSRSCGPGTQHRQLLCRQEFGGGGSSVPPERCGHLPRPNITQSCQLRLCGHWEISSPWSQCSVRCGRGQRSRQVRCVGSNGHEVGKQECASGPPPPPSREACDMGPCTTAWFYSDWSSKCSAECGTGIQRRAVVCLRSGETLQGDPEAGSTEQGCPLRSRPPDMRACSLGPCEKTWRWYTGPWSECSSECGSGTQHRDIICVSKLGTKFNVTSPSNCSHLPRPPALQPCQGQACEDQWFSTLWSPCSQSCQGGVQTREVQCLSSNHTLSSRCPPHLRPSRKRPCNSQPCNQRPDDQCKDSSPHCPLVVQARLCVYPYYTATCCRSCAHVLEQSQLEPA.

The signal sequence occupies residues 1–24 (MELWLGRLWLYVMLLLLLLQLCQD). One can recognise a TSP type-1 1 domain in the interval 47–91 (GPWGRWASCSQPCGVGVQRRSRTCELHPALSLPPRPPRHPEAPQP). Disordered regions lie at residues 73 to 150 (HPAL…KPGM) and 168 to 306 (LAHK…LPLT). 3 stretches are compositionally biased toward polar residues: residues 176–186 (KDSSTAEETLP), 211–237 (QSRS…SSAP), and 245–257 (PTSS…SFQG). N-linked (GlcNAc...) asparagine glycosylation is found at N451 and N731. 5 TSP type-1 domains span residues 681–740 (CPPY…QLRL), 741–800 (CGHW…GPCT), 803–865 (WFYS…GPCE), 866–925 (KTWR…QGQA), and 926–982 (CEDQ…QPCN). One can recognise a PLAC domain in the interval 985–1022 (PDDQCKDSSPHCPLVVQARLCVYPYYTATCCRSCAHVL).

In terms of assembly, interacts with CTSB. Interacts with FBN1. In terms of processing, glycosylated. Can be O-fucosylated by POFUT2 on a serine or a threonine residue found within the consensus sequence C1-X(2)-(S/T)-C2-G of the TSP type-1 repeat domains where C1 and C2 are the first and second cysteine residue of the repeat, respectively. Fucosylated repeats can then be further glycosylated by the addition of a beta-1,3-glucose residue by the glucosyltransferase, B3GALTL. Fucosylation mediates the efficient secretion of ADAMTS family members. Can also be C-glycosylated with one or two mannose molecules on tryptophan residues within the consensus sequence W-X-X-W of the TPRs, and N-glycosylated. These other glycosylations can also facilitate secretion.

Its subcellular location is the secreted. The protein localises to the extracellular space. It is found in the extracellular matrix. In terms of biological role, positive regulation of apoptosis. May facilitate FBN1 microfibril biogenesis. The protein is ADAMTS-like protein 4 of Rattus norvegicus (Rat).